Here is a 430-residue protein sequence, read N- to C-terminus: Glutamate-1-semialdehyde 2,1-aminomutase (430 aa).

Position 269 is an N6-(pyridoxal phosphate)lysine (lysine 269).

The protein belongs to the class-III pyridoxal-phosphate-dependent aminotransferase family. HemL subfamily. As to quaternary structure, homodimer. Pyridoxal 5'-phosphate is required as a cofactor.

The protein localises to the cytoplasm. The enzyme catalyses (S)-4-amino-5-oxopentanoate = 5-aminolevulinate. The protein operates within porphyrin-containing compound metabolism; protoporphyrin-IX biosynthesis; 5-aminolevulinate from L-glutamyl-tRNA(Glu): step 2/2. This chain is Glutamate-1-semialdehyde 2,1-aminomutase, found in Desulfitobacterium hafniense (strain DSM 10664 / DCB-2).